Here is a 646-residue protein sequence, read N- to C-terminus: Peptidylprolyl isomerase domain and WD repeat-containing protein 1 (646 aa).

The interval 1-30 (MAAESGSDFQQRRRRRRDPEEPEKTELSER) is disordered. A2 is modified (N-acetylalanine). Positions 17–30 (RDPEEPEKTELSER) are enriched in basic and acidic residues. WD repeat units follow at residues 80–118 (ASMYERSYMHRDVITHVVCTKTDFIITASHDGHVKFWKK), 124–162 (EFVKHFRSHLGVIESIAVSSEGALFCSVGDDKAMKVFDV), 168–208 (INML…IYDG), 213–252 (QPLHIFDKLHTSPLTQIRLNPVYKAVVSSDKSGMIEYWTG), 271–309 (TDLYEFAKCKAYPTSVCFSPDGKKIATIGSDRKVRIFRF), 345–386 (AVER…VETN), and 401–453 (MQLA…MFTK). The segment covering 455-478 (EPEDTKSADSDRDVFNEKPSKEEV) has biased composition (basic and acidic residues). The disordered stretch occupies residues 455-490 (EPEDTKSADSDRDVFNEKPSKEEVMAATQAEGPKRV). In terms of domain architecture, PPIase cyclophilin-type spans 490 to 645 (VSDSAIIHTS…EDVSIINITV (156 aa)).

It belongs to the cyclophilin-type PPIase family. PPIL1 subfamily. As to quaternary structure, identified in the spliceosome C complex.

It localises to the nucleus. The catalysed reaction is [protein]-peptidylproline (omega=180) = [protein]-peptidylproline (omega=0). Its activity is regulated as follows. Inhibited by cyclosporin A (CsA). Functionally, PPIase that catalyzes the cis-trans isomerization of proline imidic peptide bonds in oligopeptides and may therefore assist protein folding. May be involved in pre-mRNA splicing. In Homo sapiens (Human), this protein is Peptidylprolyl isomerase domain and WD repeat-containing protein 1.